The primary structure comprises 321 residues: NADPH-dependent codeinone reductase 1-1 (321 aa).

NADPH-binding residues include threonine 27 and aspartate 51. Catalysis depends on proton donor residues tyrosine 56 and histidine 119. Histidine 119 contributes to the substrate binding site. Residues glutamine 187, serine 214, leucine 216, serine 264, and arginine 269 each coordinate NADPH.

This sequence belongs to the aldo/keto reductase family. In terms of tissue distribution, latex secreting cells (laticifer cells). Expressed constitutively and ubiquitously with highest levels in capsules. Restricted to the parietal region of sieve elements adjacent or proximal to laticifers in roots, stems, leaves and carpels.

It is found in the cytoplasm. The protein localises to the cytosol. The catalysed reaction is codeine + NADP(+) = codeinone + NADPH + H(+). The enzyme catalyses neopine + NADP(+) = neopinone + NADPH + H(+). It catalyses the reaction morphine + NADP(+) = morphinone + NADPH + H(+). It carries out the reaction neomorphine + NADP(+) = neomorphinone + NADPH + H(+). The protein operates within alkaloid biosynthesis; morphine biosynthesis. In terms of biological role, NADPH-dependent reductase involved in biosynthesis of morphinan-type benzylisoquinoline and opiate alkaloids natural products. Reduces codeinone to codeine in the penultimate step in morphine biosynthesis. Can use morphinone, hydrocodone and hydromorphone as substrate during reductive reaction with NADPH as cofactor, and morphine and dihydrocodeine as substrate during oxidative reaction with NADP as cofactor. Converts morphinone to morphine, and neomorphinone to neomorphine. Reduces irreversibly neopinone, a spontaneous isomer of codeinone, to neopine; in planta, neopine levels are limited to low levels. In Papaver somniferum (Opium poppy), this protein is NADPH-dependent codeinone reductase 1-1.